The primary structure comprises 100 residues: Urease subunit gamma (100 aa).

It belongs to the urease gamma subunit family. Heterotrimer of UreA (gamma), UreB (beta) and UreC (alpha) subunits. Three heterotrimers associate to form the active enzyme.

It localises to the cytoplasm. The catalysed reaction is urea + 2 H2O + H(+) = hydrogencarbonate + 2 NH4(+). The protein operates within nitrogen metabolism; urea degradation; CO(2) and NH(3) from urea (urease route): step 1/1. In Cereibacter sphaeroides (strain ATCC 17025 / ATH 2.4.3) (Rhodobacter sphaeroides), this protein is Urease subunit gamma.